Consider the following 486-residue polypeptide: Homoserine O-acetyltransferase (486 aa).

Residues 66-436 (NVLVICHALT…PEGHDAFLLE (371 aa)) enclose the AB hydrolase-1 domain. S162 is a catalytic residue. The Nucleophile role is filled by S162. The segment at 248–274 (KFSRRSPSIAQQQKAQKAEVRKPSTVS) is disordered. Over residues 250–262 (SRRSPSIAQQQKA) the composition is skewed to polar residues. Active-site residues include D401 and H430.

This sequence belongs to the AB hydrolase superfamily. MetX family.

The enzyme catalyses L-homoserine + acetyl-CoA = O-acetyl-L-homoserine + CoA. It participates in amino-acid biosynthesis; L-methionine biosynthesis via de novo pathway; O-acetyl-L-homoserine from L-homoserine: step 1/1. In terms of biological role, commits homoserine to the methionine biosynthesis pathway by catalyzing its O-acetylation. This is Homoserine O-acetyltransferase (MET2) from Saccharomyces pastorianus (Lager yeast).